A 218-amino-acid chain; its full sequence is Redox-sensing transcriptional repressor Rex (218 aa).

Residues W25–V64 constitute a DNA-binding region (H-T-H motif). G99–G104 serves as a coordination point for NAD(+).

Belongs to the transcriptional regulatory Rex family. In terms of assembly, homodimer.

Its subcellular location is the cytoplasm. Its function is as follows. Modulates transcription in response to changes in cellular NADH/NAD(+) redox state. The sequence is that of Redox-sensing transcriptional repressor Rex from Porphyromonas gingivalis (strain ATCC 33277 / DSM 20709 / CIP 103683 / JCM 12257 / NCTC 11834 / 2561).